The primary structure comprises 137 residues: 15 kDa protein A (137 aa).

The signal sequence occupies residues 1-20; it reads MAGVWKVLVVLVGLAVVACA. Cystine bridges form between Cys-77–Cys-88 and Cys-99–Cys-116.

This sequence belongs to the cathelicidin family. As to expression, large granules of neutrophils.

The protein localises to the secreted. In terms of biological role, binds to bacterial lipopolysaccharides (LPS), potentiates strongly the early antibacterial effects of BPI. Inhibits the late lethal action of BPI. This is 15 kDa protein A from Oryctolagus cuniculus (Rabbit).